The chain runs to 418 residues: Pyruvate kinase isozyme G, chloroplastic (418 aa).

K(+)-binding residues include Asp-14 and Thr-15. Arg-21 is an ATP binding site. Glu-165 serves as a coordination point for Mg(2+). Residues Gly-188, Asp-189, and Thr-221 each coordinate substrate. Asp-189 contributes to the Mg(2+) binding site.

Belongs to the pyruvate kinase family. The cofactor is Mg(2+). It depends on K(+) as a cofactor. In terms of tissue distribution, expressed in developing and germinating endosperm and in roots.

The protein localises to the plastid. It is found in the chloroplast. It carries out the reaction pyruvate + ATP = phosphoenolpyruvate + ADP + H(+). The protein operates within carbohydrate degradation; glycolysis; pyruvate from D-glyceraldehyde 3-phosphate: step 5/5. This chain is Pyruvate kinase isozyme G, chloroplastic, found in Ricinus communis (Castor bean).